A 324-amino-acid chain; its full sequence is Beta-ketoacyl-[acyl-carrier-protein] synthase III (324 aa).

Catalysis depends on residues C114 and H251. The interval 252–256 (QANKR) is ACP-binding. Residue N281 is part of the active site.

The protein belongs to the thiolase-like superfamily. FabH family. As to quaternary structure, homodimer.

The protein localises to the cytoplasm. It catalyses the reaction malonyl-[ACP] + acetyl-CoA + H(+) = 3-oxobutanoyl-[ACP] + CO2 + CoA. The protein operates within lipid metabolism; fatty acid biosynthesis. Catalyzes the condensation reaction of fatty acid synthesis by the addition to an acyl acceptor of two carbons from malonyl-ACP. Catalyzes the first condensation reaction which initiates fatty acid synthesis and may therefore play a role in governing the total rate of fatty acid production. Possesses both acetoacetyl-ACP synthase and acetyl transacylase activities. Its substrate specificity determines the biosynthesis of branched-chain and/or straight-chain of fatty acids. This is Beta-ketoacyl-[acyl-carrier-protein] synthase III from Bradyrhizobium sp. (strain BTAi1 / ATCC BAA-1182).